A 406-amino-acid polypeptide reads, in one-letter code: UPF0761 membrane protein NMB0524 (406 aa).

6 helical membrane passes run 43-63, 100-120, 139-159, 176-196, 210-230, and 248-268; these read LLAL…FPVF, LTAI…RTID, FLVY…GISF, WSGA…LWGL, AFVG…LFTW, and VPFF…GAVL.

This sequence belongs to the UPF0761 family.

It localises to the cell inner membrane. This Neisseria meningitidis serogroup B (strain ATCC BAA-335 / MC58) protein is UPF0761 membrane protein NMB0524.